Consider the following 441-residue polypeptide: Trigger factor (441 aa).

The region spanning 175 to 260 is the PPIase FKBP-type domain; that stretch reads GDKVVIDYNS…LVSIMVPKDV (86 aa).

It belongs to the FKBP-type PPIase family. Tig subfamily.

Its subcellular location is the cytoplasm. It carries out the reaction [protein]-peptidylproline (omega=180) = [protein]-peptidylproline (omega=0). Its function is as follows. Involved in protein export. Acts as a chaperone by maintaining the newly synthesized protein in an open conformation. Functions as a peptidyl-prolyl cis-trans isomerase. The polypeptide is Trigger factor (Anaplasma marginale (strain St. Maries)).